Here is a 183-residue protein sequence, read N- to C-terminus: UPF0397 protein EF_2154 (183 aa).

5 helical membrane-spanning segments follow: residues Ile10–Pro30, Phe44–Gly64, Gly74–Ala94, Ile115–Leu135, and Gln147–Met167.

It belongs to the UPF0397 family.

The protein localises to the cell membrane. This Enterococcus faecalis (strain ATCC 700802 / V583) protein is UPF0397 protein EF_2154.